Consider the following 301-residue polypeptide: Methionine aminopeptidase (301 aa).

Residue H65 coordinates substrate. Residues D85, D96, and H156 each coordinate a divalent metal cation. H164 serves as a coordination point for substrate. 2 residues coordinate a divalent metal cation: E189 and E284.

Belongs to the peptidase M24A family. Methionine aminopeptidase archaeal type 2 subfamily. Monomer. Co(2+) serves as cofactor. The cofactor is Zn(2+). Requires Mn(2+) as cofactor. Fe(2+) is required as a cofactor.

It carries out the reaction Release of N-terminal amino acids, preferentially methionine, from peptides and arylamides.. In terms of biological role, removes the N-terminal methionine from nascent proteins. The N-terminal methionine is often cleaved when the second residue in the primary sequence is small and uncharged (Met-Ala-, Cys, Gly, Pro, Ser, Thr, or Val). The protein is Methionine aminopeptidase of Saccharolobus solfataricus (strain ATCC 35092 / DSM 1617 / JCM 11322 / P2) (Sulfolobus solfataricus).